Here is a 475-residue protein sequence, read N- to C-terminus: ATP synthase subunit beta (475 aa).

161–168 (GGAGVGKT) provides a ligand contact to ATP.

This sequence belongs to the ATPase alpha/beta chains family. F-type ATPases have 2 components, CF(1) - the catalytic core - and CF(0) - the membrane proton channel. CF(1) has five subunits: alpha(3), beta(3), gamma(1), delta(1), epsilon(1). CF(0) has three main subunits: a(1), b(2) and c(9-12). The alpha and beta chains form an alternating ring which encloses part of the gamma chain. CF(1) is attached to CF(0) by a central stalk formed by the gamma and epsilon chains, while a peripheral stalk is formed by the delta and b chains.

The protein resides in the cell membrane. The enzyme catalyses ATP + H2O + 4 H(+)(in) = ADP + phosphate + 5 H(+)(out). Produces ATP from ADP in the presence of a proton gradient across the membrane. The catalytic sites are hosted primarily by the beta subunits. The chain is ATP synthase subunit beta from Mycoplasma mycoides subsp. mycoides SC (strain CCUG 32753 / NCTC 10114 / PG1).